The chain runs to 541 residues: tRNA uridine(34) acetyltransferase (541 aa).

Residues 76-336 (KPVRTISGVA…GEYKPYREEE (261 aa)) form a radical S-adenosyl-L-methionine (rSAM) region. Positions 79–350 (RTISGVAVVA…ISYAKSIMPK (272 aa)) constitute a Radical SAM core domain. The [4Fe-4S] cluster site is built by Cys-96, Cys-101, and Cys-104. Acetyl-CoA contacts are provided by residues Lys-156, 467–470 (QLHV), 491–493 (YGR), and Tyr-524. An N-acetyltransferase domain is found at 401–541 (VMYKKGIMPD…VGAYMGKYLE (141 aa)).

The protein belongs to the ELP3 family. [4Fe-4S] cluster serves as cofactor.

It catalyses the reaction uridine(34) in tRNA + acetyl-CoA + S-adenosyl-L-methionine + H2O = 5-(carboxymethyl)uridine(34) in tRNA + 5'-deoxyadenosine + L-methionine + CoA + 2 H(+). The protein operates within tRNA modification. In terms of biological role, tRNA uridine(34) acetyltransferase, which mediates formation of carboxymethyluridine in the wobble base at position 34 in tRNAs. The proposed mechanism is the following: (i) recruits S-adenosyl-L-methionine and cleaves it to generate a 5'-deoxyadenosine radical (5'-dA) in the radical S-adenosyl-L-methionine (rSAM) region, (ii) hydrolyzes acetyl-CoA in the N-acetyltransferase domain and (iii) an acetyl radical is formed by the products of the two domains and (iv) is transferred onto the C5 position of uridine(34) in the bound tRNA molecule. Does not show protein lysine acetyltransferase activity. The protein is tRNA uridine(34) acetyltransferase of Methanocaldococcus jannaschii (strain ATCC 43067 / DSM 2661 / JAL-1 / JCM 10045 / NBRC 100440) (Methanococcus jannaschii).